The sequence spans 139 residues: Translation initiation factor 2 subunit beta (139 aa).

This sequence belongs to the eIF-2-beta/eIF-5 family. As to quaternary structure, heterotrimer composed of an alpha, a beta and a gamma chain.

In terms of biological role, eIF-2 functions in the early steps of protein synthesis by forming a ternary complex with GTP and initiator tRNA. In Methanococcus aeolicus (strain ATCC BAA-1280 / DSM 17508 / OCM 812 / Nankai-3), this protein is Translation initiation factor 2 subunit beta.